Consider the following 156-residue polypeptide: Small ribosomal subunit protein uS7 (156 aa).

It belongs to the universal ribosomal protein uS7 family. As to quaternary structure, part of the 30S ribosomal subunit. Contacts proteins S9 and S11.

Its function is as follows. One of the primary rRNA binding proteins, it binds directly to 16S rRNA where it nucleates assembly of the head domain of the 30S subunit. Is located at the subunit interface close to the decoding center, probably blocks exit of the E-site tRNA. The chain is Small ribosomal subunit protein uS7 from Nocardioides sp. (strain ATCC BAA-499 / JS614).